The chain runs to 434 residues: Eukaryotic translation initiation factor 3 subunit E-1 (434 aa).

One can recognise a PCI domain in the interval 219 to 392 (FFNHPKGRDL…GHVVMGTQPL (174 aa)).

This sequence belongs to the eIF-3 subunit E family. In terms of assembly, component of the eukaryotic translation initiation factor 3 (eIF-3) complex. The eIF-3 complex interacts with pix. Interacts with mxt.

Its subcellular location is the cytoplasm. In terms of biological role, component of the eukaryotic translation initiation factor 3 (eIF-3) complex, which is involved in protein synthesis of a specialized repertoire of mRNAs and, together with other initiation factors, stimulates binding of mRNA and methionyl-tRNAi to the 40S ribosome. The eIF-3 complex specifically targets and initiates translation of a subset of mRNAs involved in cell proliferation. This chain is Eukaryotic translation initiation factor 3 subunit E-1 (eIF3-S6-1), found in Drosophila willistoni (Fruit fly).